A 65-amino-acid chain; its full sequence is Large ribosomal subunit protein bL35 (65 aa).

It belongs to the bacterial ribosomal protein bL35 family.

This Acetivibrio thermocellus (strain ATCC 27405 / DSM 1237 / JCM 9322 / NBRC 103400 / NCIMB 10682 / NRRL B-4536 / VPI 7372) (Clostridium thermocellum) protein is Large ribosomal subunit protein bL35.